The chain runs to 530 residues: Na(+)/H(+) antiporter NhaB (530 aa).

12 helical membrane-spanning segments follow: residues 13 to 33, 98 to 118, 123 to 145, 149 to 166, 205 to 225, 238 to 258, 308 to 328, 330 to 350, 356 to 376, 393 to 413, 451 to 471, and 480 to 500; these read FLGKAPDWYKLAIISFLIINP, LLLVFMVAGIYFMKELLLFIF, LGIQSKILLSVAFCVAAAFLSAF, LTVIAVVISVAVGFYSIY, LLMHAGVGTALGGVMTMVGEP, FGEFIIRMLPVTLPVFFCGIL, IAVWLIVGLALHVAEVGLIGL, VIILATAFTGVIEEHSMGKAF, FTALLAVFFAVVAVIIDQALF, LALFYVANGILSMVSDNVFVG, ATPNGQAAFLFLLTSALAPLI, and IMALPYTIVLALVGLAGIVFF.

This sequence belongs to the NhaB Na(+)/H(+) (TC 2.A.34) antiporter family.

Its subcellular location is the cell inner membrane. The enzyme catalyses 2 Na(+)(in) + 3 H(+)(out) = 2 Na(+)(out) + 3 H(+)(in). Na(+)/H(+) antiporter that extrudes sodium in exchange for external protons. The sequence is that of Na(+)/H(+) antiporter NhaB from Vibrio atlanticus (strain LGP32) (Vibrio splendidus (strain Mel32)).